The chain runs to 228 residues: Cytochrome c oxidase subunit 2 (228 aa).

At Met-1–His-26 the chain is on the mitochondrial intermembrane side. Residues Ala-27–Asn-48 form a helical membrane-spanning segment. Residues Lys-49 to Glu-62 lie on the Mitochondrial matrix side of the membrane. Residues Thr-63–Arg-82 form a helical membrane-spanning segment. Residues Leu-83 to Ser-228 lie on the Mitochondrial intermembrane side of the membrane. Positions 161, 196, 198, 200, 204, and 207 each coordinate Cu cation. Glu-198 provides a ligand contact to Mg(2+).

Belongs to the cytochrome c oxidase subunit 2 family. As to quaternary structure, component of the cytochrome c oxidase (complex IV, CIV), a multisubunit enzyme composed of a catalytic core of 3 subunits and several supernumerary subunits. The complex exists as a monomer or a dimer and forms supercomplexes (SCs) in the inner mitochondrial membrane with ubiquinol-cytochrome c oxidoreductase (cytochrome b-c1 complex, complex III, CIII). It depends on Cu cation as a cofactor.

It is found in the mitochondrion inner membrane. It carries out the reaction 4 Fe(II)-[cytochrome c] + O2 + 8 H(+)(in) = 4 Fe(III)-[cytochrome c] + 2 H2O + 4 H(+)(out). In terms of biological role, component of the cytochrome c oxidase, the last enzyme in the mitochondrial electron transport chain which drives oxidative phosphorylation. The respiratory chain contains 3 multisubunit complexes succinate dehydrogenase (complex II, CII), ubiquinol-cytochrome c oxidoreductase (cytochrome b-c1 complex, complex III, CIII) and cytochrome c oxidase (complex IV, CIV), that cooperate to transfer electrons derived from NADH and succinate to molecular oxygen, creating an electrochemical gradient over the inner membrane that drives transmembrane transport and the ATP synthase. Cytochrome c oxidase is the component of the respiratory chain that catalyzes the reduction of oxygen to water. Electrons originating from reduced cytochrome c in the intermembrane space (IMS) are transferred via the dinuclear copper A center (CU(A)) of subunit 2 and heme A of subunit 1 to the active site in subunit 1, a binuclear center (BNC) formed by heme A3 and copper B (CU(B)). The BNC reduces molecular oxygen to 2 water molecules using 4 electrons from cytochrome c in the IMS and 4 protons from the mitochondrial matrix. The sequence is that of Cytochrome c oxidase subunit 2 (COII) from Artemia franciscana (Brine shrimp).